A 215-amino-acid polypeptide reads, in one-letter code: Probable transaldolase (215 aa).

Residue K83 is the Schiff-base intermediate with substrate of the active site.

The protein belongs to the transaldolase family. Type 3B subfamily.

The protein localises to the cytoplasm. The catalysed reaction is D-sedoheptulose 7-phosphate + D-glyceraldehyde 3-phosphate = D-erythrose 4-phosphate + beta-D-fructose 6-phosphate. Its pathway is carbohydrate degradation; pentose phosphate pathway; D-glyceraldehyde 3-phosphate and beta-D-fructose 6-phosphate from D-ribose 5-phosphate and D-xylulose 5-phosphate (non-oxidative stage): step 2/3. In terms of biological role, transaldolase is important for the balance of metabolites in the pentose-phosphate pathway. The sequence is that of Probable transaldolase from Pelotomaculum thermopropionicum (strain DSM 13744 / JCM 10971 / SI).